A 412-amino-acid chain; its full sequence is Decapping nuclease RAI1 (412 aa).

An a divalent metal cation-binding site is contributed by E196. Substrate-binding residues include C228 and E245. 3 residues coordinate a divalent metal cation: D247, E265, and L266. The substrate site is built by K267 and Q291.

It belongs to the DXO/Dom3Z family. In terms of assembly, interacts with exr-1/rat1; the interaction is direct, stabilizes exr-1 protein structure and stimulates its exoribonuclease activity. The interaction also stimulates rai1 pyrophosphohydrolase activity, probably by recruiting it to mRNA substrates. It depends on a divalent metal cation as a cofactor.

Its subcellular location is the nucleus. The catalysed reaction is a 5'-end NAD(+)-phospho-ribonucleoside in mRNA + H2O = a 5'-end phospho-ribonucleoside in mRNA + NAD(+) + H(+). The enzyme catalyses a 5'-end (N(7)-methyl 5'-triphosphoguanosine)-ribonucleoside-ribonucleotide in mRNA + H2O = a (N(7)-methyl 5'-triphosphoguanosine)-nucleoside + a 5'-end phospho-ribonucleoside in mRNA + H(+). It catalyses the reaction a 5'-end triphospho-ribonucleoside in mRNA + H2O = a 5'-end phospho-ribonucleoside in mRNA + diphosphate + H(+). Functionally, decapping enzyme for NAD-capped RNAs: specifically hydrolyzes the nicotinamide adenine dinucleotide (NAD) cap from a subset of RNAs by removing the entire NAD moiety from the 5'-end of an NAD-capped RNA. The NAD-cap is present at the 5'-end of some RNAs and snoRNAs. In contrast to the canonical 5'-end N7 methylguanosine (m7G) cap, the NAD cap promotes mRNA decay. Also acts as a non-canonical decapping enzyme that removes the entire cap structure of m7G capped or incompletely capped RNAs. Has decapping activity toward incomplete 5'-end m7G cap mRNAs such as unmethylated 5'-end-capped RNA (cap0), while it has no activity toward 2'-O-ribose methylated m7G cap (cap1). Also possesses RNA 5'-pyrophosphohydrolase activity by hydrolyzing the 5'-end triphosphate to release pyrophosphates. Stimulates exoribonuclease activity of Rat1, allowing it to degrade RNAs with stable secondary structure more effectively. The protein is Decapping nuclease RAI1 (rai1) of Neurospora crassa (strain ATCC 24698 / 74-OR23-1A / CBS 708.71 / DSM 1257 / FGSC 987).